We begin with the raw amino-acid sequence, 83 residues long: uncharacterized protein (83 aa).

Residues 15 to 36 (RLKNGRGNKTMSESDYNTSDSG) form a disordered region. The span at 21 to 35 (GNKTMSESDYNTSDS) shows a compositional bias: polar residues.

This is an uncharacterized protein from Aedes vexans (Inland floodwater mosquito).